The chain runs to 275 residues: Undecaprenyl-diphosphatase (275 aa).

The next 8 helical transmembrane spans lie at 1-21 (MDWVYAIVYGIVEGITEFLPI), 42-62 (VKDAFEVVIQGGAILSVLVYY), 80-100 (TLWTGVLVATIPAVVLGLAFG), 107-127 (LFKPSVVAWALIVGGVLMWLI), 147-167 (SLLIGVLQCLALVWPGFSRSA), 184-204 (TKFSFYLGVPTLGGAALLNLV), 214-234 (IGLLNVVLGAGVSFVVAYLAI), and 249-269 (FAVYRVAVGVLILVLIATGVM).

The protein belongs to the UppP family.

It is found in the cell membrane. It catalyses the reaction di-trans,octa-cis-undecaprenyl diphosphate + H2O = di-trans,octa-cis-undecaprenyl phosphate + phosphate + H(+). Its function is as follows. Catalyzes the dephosphorylation of undecaprenyl diphosphate (UPP). Confers resistance to bacitracin. The sequence is that of Undecaprenyl-diphosphatase from Deinococcus deserti (strain DSM 17065 / CIP 109153 / LMG 22923 / VCD115).